The sequence spans 339 residues: Adenosine deaminase (339 aa).

Residues histidine 15 and histidine 17 each contribute to the Zn(2+) site. Histidine 17, aspartate 19, and glycine 172 together coordinate substrate. Residue histidine 199 participates in Zn(2+) binding. Glutamate 202 (proton donor) is an active-site residue. Aspartate 279 lines the Zn(2+) pocket.

Belongs to the metallo-dependent hydrolases superfamily. Adenosine and AMP deaminases family. Adenosine deaminase subfamily. Zn(2+) is required as a cofactor.

It catalyses the reaction adenosine + H2O + H(+) = inosine + NH4(+). The catalysed reaction is 2'-deoxyadenosine + H2O + H(+) = 2'-deoxyinosine + NH4(+). Functionally, catalyzes the hydrolytic deamination of adenosine and 2-deoxyadenosine. This chain is Adenosine deaminase, found in Lacticaseibacillus casei (strain BL23) (Lactobacillus casei).